A 281-amino-acid chain; its full sequence is Glycerol uptake facilitator protein (281 aa).

Residues methionine 1 to serine 5 lie on the Cytoplasmic side of the membrane. The chain crosses the membrane as a helical span at residues threonine 6–valine 34. Over alanine 35–phenylalanine 39 the chain is Periplasmic. A helical transmembrane segment spans residues glycine 40–alanine 60. Topologically, residues glycine 61–serine 63 are cytoplasmic. An intramembrane segment occupies glycine 64–leucine 67. The NPA 1 motif lies at asparagine 68–alanine 70. The segment at residues asparagine 68–phenylalanine 78 is an intramembrane region (helical). The Cytoplasmic segment spans residues alanine 79–arginine 84. A helical transmembrane segment spans residues lysine 85–tyrosine 108. The Periplasmic portion of the chain corresponds to tyrosine 109–isoleucine 143. A helical membrane pass occupies residues asparagine 144–aspartate 169. At glycine 170 to proline 177 the chain is on the cytoplasmic side. Residues leucine 178–methionine 194 traverse the membrane as a helical segment. The Periplasmic portion of the chain corresponds to glycine 195–threonine 198. Residues glycine 199–methionine 202 lie within the membrane without spanning it. The NPA 2 signature appears at asparagine 203–alanine 205. Residues asparagine 203–leucine 216 constitute an intramembrane region (helical). The Periplasmic portion of the chain corresponds to alanine 217–proline 231. The helical transmembrane segment at tyrosine 232 to leucine 254 threads the bilayer. Over isoleucine 255–leucine 281 the chain is Cytoplasmic.

Belongs to the MIP/aquaporin (TC 1.A.8) family. Homotetramer.

It is found in the cell inner membrane. The catalysed reaction is glycerol(in) = glycerol(out). Mediates glycerol diffusion across the cytoplasmic membrane via a pore-type mechanism. This Escherichia coli O157:H7 protein is Glycerol uptake facilitator protein (glpF).